The following is a 133-amino-acid chain: Ribosome-binding factor A (133 aa).

Belongs to the RbfA family. In terms of assembly, monomer. Binds 30S ribosomal subunits, but not 50S ribosomal subunits or 70S ribosomes.

It is found in the cytoplasm. In terms of biological role, one of several proteins that assist in the late maturation steps of the functional core of the 30S ribosomal subunit. Associates with free 30S ribosomal subunits (but not with 30S subunits that are part of 70S ribosomes or polysomes). Required for efficient processing of 16S rRNA. May interact with the 5'-terminal helix region of 16S rRNA. The protein is Ribosome-binding factor A of Salmonella schwarzengrund (strain CVM19633).